The primary structure comprises 277 residues: Anamorsin homolog (277 aa).

The N-terminal SAM-like domain stretch occupies residues 1-160 (MDTKRMLQNS…NIGSSFALKK (160 aa)). The interval 161-188 (SIKSPVKVQNDDYSDLIDEDSLLTEEDL) is linker. 4 residues coordinate [2Fe-2S] cluster: Cys-199, Cys-208, Cys-211, and Cys-213. The segment at 199–213 (CEVGSTRKACKNCTC) is fe-S binding site A. [4Fe-4S] cluster is bound by residues Cys-238, Cys-241, Cys-249, and Cys-252. Short sequence motifs (cx2C motif) lie at residues 238 to 241 (CGSC) and 249 to 252 (CGTC). The tract at residues 238 to 252 (CGSCGLGDAFRCGTC) is fe-S binding site B.

Belongs to the anamorsin family. As to quaternary structure, monomer. The cofactor is [2Fe-2S] cluster. Requires [4Fe-4S] cluster as cofactor.

The protein localises to the cytoplasm. Its subcellular location is the mitochondrion intermembrane space. Its function is as follows. Component of the cytosolic iron-sulfur (Fe-S) protein assembly (CIA) machinery. Required for the maturation of extramitochondrial Fe-S proteins. Part of an electron transfer chain functioning in an early step of cytosolic Fe-S biogenesis, facilitating the de novo assembly of a [4Fe-4S] cluster on the cytosolic Fe-S scaffold complex. Electrons are transferred from NADPH via a FAD- and FMN-containing diflavin oxidoreductase. Together with the diflavin oxidoreductase, also required for the assembly of the diferric tyrosyl radical cofactor of ribonucleotide reductase (RNR), probably by providing electrons for reduction during radical cofactor maturation in the catalytic small subunit. The protein is Anamorsin homolog of Populus trichocarpa (Western balsam poplar).